A 367-amino-acid chain; its full sequence is 3-dehydroquinate synthase (367 aa).

NAD(+) contacts are provided by residues 69 to 74, 103 to 107, 127 to 128, K140, and K149; these read DGEAFK, GVIGD, and TT. E182, H245, and H262 together coordinate Zn(2+).

The protein belongs to the sugar phosphate cyclases superfamily. Dehydroquinate synthase family. The cofactor is Co(2+). Zn(2+) is required as a cofactor. NAD(+) serves as cofactor.

It is found in the cytoplasm. It catalyses the reaction 7-phospho-2-dehydro-3-deoxy-D-arabino-heptonate = 3-dehydroquinate + phosphate. The protein operates within metabolic intermediate biosynthesis; chorismate biosynthesis; chorismate from D-erythrose 4-phosphate and phosphoenolpyruvate: step 2/7. Its function is as follows. Catalyzes the conversion of 3-deoxy-D-arabino-heptulosonate 7-phosphate (DAHP) to dehydroquinate (DHQ). The sequence is that of 3-dehydroquinate synthase from Pseudomonas syringae pv. syringae (strain B728a).